We begin with the raw amino-acid sequence, 322 residues long: MSKKIGILTSGGDAPGMNSAISFLAKSALSLGFEPYLIFDGYSGIIARKILPAKNFPYNGISSFGGTAIGSSRFPEFKKEEVQNKAVEILSEIGISSLVVVGGDGTYNGGYKLHLKGIKVIALPGTIDNDIQFTDYTIGFDTALNTIVETIDKLRDTANSHRRCFVVEVMGRHCQDLALYSAMATGSEILITNTNILTPEEVSQKVLEQFAKGKPSVIVTITENILPNLKEFAAKIEELTKISTRSLEVGHTQRGGRPSAFDRILAAKMAMKAMELINQDKSGLAISYLDGKIQTFDIAKVVSKPVRKTNDLVLEINKINQN.

ATP-binding positions include glycine 12, 73-74, and 103-106; these read RF and GDGT. Residue aspartate 104 coordinates Mg(2+). 126–128 lines the substrate pocket; the sequence is TID. The active-site Proton acceptor is the aspartate 128. Arginine 155 contacts ADP. Residues arginine 163 and 170–172 each bind substrate; that span reads MGR. ADP-binding positions include 186–188, lysine 212, and 214–216; these read GSE and KPS. Substrate-binding positions include glutamate 223, arginine 245, and 251 to 254; that span reads HTQR.

It belongs to the phosphofructokinase type A (PFKA) family. ATP-dependent PFK group I subfamily. Prokaryotic clade 'B1' sub-subfamily. In terms of assembly, homotetramer. Mg(2+) is required as a cofactor.

Its subcellular location is the cytoplasm. It catalyses the reaction beta-D-fructose 6-phosphate + ATP = beta-D-fructose 1,6-bisphosphate + ADP + H(+). It functions in the pathway carbohydrate degradation; glycolysis; D-glyceraldehyde 3-phosphate and glycerone phosphate from D-glucose: step 3/4. Its activity is regulated as follows. Allosterically activated by ADP and other diphosphonucleosides, and allosterically inhibited by phosphoenolpyruvate. Functionally, catalyzes the phosphorylation of D-fructose 6-phosphate to fructose 1,6-bisphosphate by ATP, the first committing step of glycolysis. This is ATP-dependent 6-phosphofructokinase from Mesomycoplasma hyopneumoniae (strain J / ATCC 25934 / NCTC 10110) (Mycoplasma hyopneumoniae).